The chain runs to 655 residues: Fidgetin-like protein 1 (655 aa).

The tract at residues 289-313 (QQKKHSNQPQRNPGPLYGGGKKSLG) is disordered. ATP-binding positions include Ala385 and 425–430 (GTGKTL).

Belongs to the AAA ATPase family. As to quaternary structure, hexamer. Requires Mg(2+) as cofactor.

It is found in the nucleus. It localises to the cytoplasm. The protein localises to the perinuclear region. It catalyses the reaction ATP + H2O = ADP + phosphate + H(+). In terms of biological role, may be involved in DNA double-strand break (DBS) repair via homologous recombination (HR). May regulate osteoblast proliferation and differentiation. The sequence is that of Fidgetin-like protein 1 (fignl1) from Xenopus laevis (African clawed frog).